An 84-amino-acid polypeptide reads, in one-letter code: UPF0512 protein O (84 aa).

It belongs to the UPF0512 family.

The sequence is that of UPF0512 protein O from Dictyostelium discoideum (Social amoeba).